The following is a 102-amino-acid chain: Small ribosomal subunit protein eS24 (102 aa).

The protein belongs to the eukaryotic ribosomal protein eS24 family.

The polypeptide is Small ribosomal subunit protein eS24 (rps24e) (Haloarcula marismortui (strain ATCC 43049 / DSM 3752 / JCM 8966 / VKM B-1809) (Halobacterium marismortui)).